The sequence spans 653 residues: Protein fem-1 homolog A (653 aa).

7 ANK repeats span residues 2–31 (DLHTAVYNAARDGKLQLLQKLLSGRSREEL), 40–70 (SGGTPLLIAARYGHLDVVEYLVDRCGASVEA), 82–111 (EGAPPLWAASAAGHLDVVRSLLRRGASVNR), 115–145 (TNSTPLRAACFDGHLEVVRYLVGEHQADLEV), 149–178 (HGHTCLMISCYKGHREIARYLLEQGAQVNR), 182–211 (KGNTALHDCAESGSLEILQLLLGCNARMER), and 214–243 (YGMTPLLAASVTGHTNIVEYLIQEQPAGDE). Serine 108 is modified (phosphoserine). Positions 242-274 (DEQAQPGLARVQPQGARSSPEEPPSGESYESCC) are disordered. 2 TPR repeats span residues 282 to 316 (VEALELLGATYVDKKRDLLGALKHWRRAMELRHQG) and 374 to 407 (SYYIRYRGAVYADSGNFERCIRLWKYALDMQQNN). 2 ANK repeats span residues 518 to 560 (NGFT…DPDS) and 564 to 593 (DNNTPLHIAAQNNCPGIMNALIEAGAHMDA).

This sequence belongs to the fem-1 family. As to quaternary structure, component of a CRL2 E3 ubiquitin-protein ligase complex, also named ECS (Elongin BC-CUL2/5-SOCS-box protein) complex, composed of CUL2, Elongin BC (ELOB and ELOC), RBX1 and substrate-specific adapter FEM1A. Interacts with PTGER4. Interacts with NFKB1; the interaction is direct. In terms of processing, phosphorylated; highly phosphorylated in myoblasts and myotubes. Phosphorylation at Ser-108 promotes PGE2-EP4-mediated inhibition of inflammation. Dephosphorylated by protein phosphatase 2A (PP2A).

The protein localises to the mitochondrion. It localises to the cytoplasm. It functions in the pathway protein modification; protein ubiquitination. Functionally, substrate-recognition component of a Cul2-RING (CRL2) E3 ubiquitin-protein ligase complex of the DesCEND (destruction via C-end degrons) pathway, which recognizes a C-degron located at the extreme C terminus of target proteins, leading to their ubiquitination and degradation. The C-degron recognized by the DesCEND pathway is usually a motif of less than ten residues and can be present in full-length proteins, truncated proteins or proteolytically cleaved forms. The CRL2(FEM1A) complex specifically recognizes proteins with an arginine at the C-terminus: recognizes and binds proteins ending with -Lys/Arg-Xaa-Arg and -Lys/Arg-Xaa-Xaa-Arg C-degrons, such as SIL1 or OR51B2, leading to their ubiquitination and degradation. Involved in PGE2-EP4-mediated inhibition of inflammation of macrophages via interaction with NFKB1 and PTGER4. Promotes inflammation in brain microglia through MAP2K4/MKK4-mediated signaling. The sequence is that of Protein fem-1 homolog A from Bos taurus (Bovine).